Consider the following 391-residue polypeptide: Cold-shock protein CS120 (391 aa).

17 repeat units span residues 9 to 31 (GEKKGIMEKIKEKLPGGHGDHKE), 49 to 62 (TGGAYGQQGHAGTT), 72 to 94 (GEKKGVMENIKDKLPGGHQDHQQ), 95 to 108 (TGGTYGQQGHTGTA), 115 to 128 (TGGTYGQQGHTGTA), 135 to 148 (TGGTYGEQGHTGVT), 156 to 178 (GEKKGVMENIKEKLPGGHGDHQQ), 179 to 192 (TGGTYGQQGHTGTA), 199 to 212 (GGGTYEQHGHTGMT), 220 to 242 (GEKKGVMENIKDKLPGGHGDHQQ), 243 to 256 (TGGTYGQQGHTGTA), 263 to 276 (GGGTYEQHGHTGMT), 284 to 306 (GEKKGVMENIKEKLPGGHSDHQQ), 307 to 320 (TGGAYGQQGHTGTA), 327 to 340 (GGGTYGQHGHAGVI), 350 to 363 (TGGTHGQHGHTGTT), and 374 to 391 (GEKKSLMDKIKDKLPGQH). The interval 9 to 391 (GEKKGIMEKI…KIKDKLPGQH (383 aa)) is 6 X 23 AA approximate repeats. Over residues 21–33 (KLPGGHGDHKETA) the composition is skewed to basic and acidic residues. Positions 21–391 (KLPGGHGDHK…KIKDKLPGQH (371 aa)) are disordered. Over residues 34-59 (GTHGHPGTATHGAPATGGAYGQQGHA) the composition is skewed to low complexity. Positions 49-363 (TGGAYGQQGH…HGQHGHTGTT (315 aa)) are 11 X 14 AA approximate repeats. Over residues 70–92 (HAGEKKGVMENIKDKLPGGHQDH) the composition is skewed to basic and acidic residues. A compositionally biased stretch (low complexity) spans 93–145 (QQTGGTYGQQGHTGTATHGTPATGGTYGQQGHTGTATHGTPATGGTYGEQGHT). Positions 155–176 (TGEKKGVMENIKEKLPGGHGDH) are enriched in basic and acidic residues. Low complexity predominate over residues 177 to 196 (QQTGGTYGQQGHTGTATHGT). The segment covering 219–240 (TGEKKGVMENIKDKLPGGHGDH) has biased composition (basic and acidic residues). Low complexity-rich tracts occupy residues 241–260 (QQTGGTYGQQGHTGTATQGT) and 272–282 (HTGMTGAGTHS). Basic and acidic residues predominate over residues 283–304 (TGEKKGVMENIKEKLPGGHSDH). Composition is skewed to low complexity over residues 305-324 (QQTGGAYGQQGHTGTATHGT) and 333-351 (QHGHAGVIGTETHGTTATG). Over residues 361–372 (GTTGTGTHGSDG) the composition is skewed to gly residues. A compositionally biased stretch (basic and acidic residues) spans 373 to 391 (IGEKKSLMDKIKDKLPGQH).

This sequence belongs to the plant dehydrin family.

Its function is as follows. May reduce intracellular freezing damage during winter by hydrogen-bonding to the lattice of the nascent ice crystals, thus modifying the structure and/or propagation of ice crystals. The chain is Cold-shock protein CS120 (CS120) from Triticum aestivum (Wheat).